Here is a 340-residue protein sequence, read N- to C-terminus: MNCLVCSARAFNRNYGVMSCFACKMFFRRTVFKNMLFNCKYFKNCTIHYKTHPKCRACRFQKCLNIGMKAASKNDRIVSIGNYEDYNFDKLLNDLIVKNDKNYSNFIDFYSLEDPSLKDIIEDRSIMKLVRRTPETLNDVDQWSNMLAYSRISYFLDFNFIRELDSSDKNTLFKYNVSRAGCLALAMCAYSENKPKLTFPNDVDIFPSEMYNLCGSSTAVLNQVSGQVIAKFIELEIRQEEYLLLLLVMFCNASITNNFSHKTKLILSSHQQVYCSALFRYCQLKYSKSAPTRFTELLSVFGIVNKSVNNMSFLSMMVQCYNPKFNFKRLMQDIFSHTLS.

Residues 1–75 constitute a DNA-binding region (nuclear receptor); the sequence is MNCLVCSARA…IGMKAASKND (75 aa). 2 consecutive NR C4-type zinc fingers follow at residues 3 to 23 and 39 to 58; these read CLVCSARAFNRNYGVMSCFAC and CKYFKNCTIHYKTHPKCRAC. The NR LBD domain occupies 98–337; the sequence is KNDKNYSNFI…KRLMQDIFSH (240 aa).

It belongs to the nuclear hormone receptor family.

Its subcellular location is the nucleus. Functionally, orphan nuclear receptor. The chain is Nuclear hormone receptor family member nhr-268 (nhr-268) from Caenorhabditis elegans.